A 641-amino-acid polypeptide reads, in one-letter code: MRLLEPIKVGKIELKNRVMFPPMTTGYEGRDGTIVEQSFNFYKRLAEGGVSYIVLGDVAPVNTISPTPKLFHDGQIEAFRKLADAVHEFDCKLGIQIFHPEYDVEALAELFRKGDMEGGRAKMRHDMVHFIQEVTEEQLNSILDKIGECVKRAQSAGVDIIEVHGDRLIGSFCSTLINRRTDSYGGSFENRIRFALRVVDKIREVAPDICIDYKLPVVTENPLRGKGGLMINEAVEFAKILERSGVDMIHVGQANHTGNMNDTIPAMGTQPYCFMSKYTKQIKEAVSIPVSSVGRIVTPENAEALIENGVCDIVGLGRSLLADPDYVKKLEAGEGRRIRHCMMCNKGCTDAIQNRKFLSCVLNAENGYEYERTITPSDEKKKVVVIGGGVAGMEAARVASVKGHEVVLFEKETTLGGQLNIASVPPRKSEMNRALRYLTNEMKELHVDLRLGRTADAEMILAENPDNVIVAAGAHNVIPPIEGSKMPHVFDAWKVLNHEELPSGRVVVIGGGLVGAETAELLAEMGCQVSVVEMMEEIAKEESKTVRPVLFESFEKYQVQLLTGTKVTAITANSVEAENAEGKVSLPCDYVVLAVGARPNLFDVQALEDKGVQVSFVGDCNERAADINRAVEEGYLAANVL.

An FMN-binding site is contributed by Q96. The Proton donor role is filled by R167. FMN is bound by residues K214, R295, and 317–318 (GR). The [4Fe-4S] cluster site is built by C341, C344, C348, and C360. FAD-binding residues include A391, E410, Q418, K428, and A455.

In the N-terminal section; belongs to the NADH:flavin oxidoreductase/NADH oxidase family. The cofactor is FAD. Requires FMN as cofactor. [4Fe-4S] cluster serves as cofactor.

The enzyme catalyses urobilinogen + 4 A = (4Z,15Z)-bilirubin IXalpha + 4 AH2. It carries out the reaction urobilinogen + 2 A = (4Z,15Z)-mesobilirubin IXalpha + 2 AH2. Its pathway is porphyrin-containing compound metabolism; protoheme degradation. In terms of biological role, bilirubin reductase that catalyzes reduction of mesobilirubin and/or bilirubin to urobilinogen, a key step during heme degradation. Urobilinogen then spontaneously degrades into urobilin, which gives urine its distinctive yellow color. The polypeptide is Bilirubin reductase (Mediterraneibacter gnavus (strain CC55_001C)).